A 53-amino-acid chain; its full sequence is Conotoxin Cal9.2e (53 aa).

A propeptide spanning residues 1 to 6 (KKGVTQ) is cleaved from the precursor. Cystine bridges form between C15–C32, C20–C42, and C22–C47.

Expressed by the venom duct.

Its subcellular location is the secreted. Probable neurotoxin with unknown target. Possibly targets ion channels. The sequence is that of Conotoxin Cal9.2e from Californiconus californicus (California cone).